An 82-amino-acid polypeptide reads, in one-letter code: ATP synthase subunit c (82 aa).

The next 2 helical transmembrane spans lie at 7 to 27 (AASV…PGIG) and 57 to 77 (LAFM…LLFA).

It belongs to the ATPase C chain family. As to quaternary structure, F-type ATPases have 2 components, F(1) - the catalytic core - and F(0) - the membrane proton channel. F(1) has five subunits: alpha(3), beta(3), gamma(1), delta(1), epsilon(1). F(0) has four main subunits: a(1), b(1), b'(1) and c(10-14). The alpha and beta chains form an alternating ring which encloses part of the gamma chain. F(1) is attached to F(0) by a central stalk formed by the gamma and epsilon chains, while a peripheral stalk is formed by the delta, b and b' chains.

The protein resides in the cellular thylakoid membrane. Its function is as follows. F(1)F(0) ATP synthase produces ATP from ADP in the presence of a proton or sodium gradient. F-type ATPases consist of two structural domains, F(1) containing the extramembraneous catalytic core and F(0) containing the membrane proton channel, linked together by a central stalk and a peripheral stalk. During catalysis, ATP synthesis in the catalytic domain of F(1) is coupled via a rotary mechanism of the central stalk subunits to proton translocation. Functionally, key component of the F(0) channel; it plays a direct role in translocation across the membrane. A homomeric c-ring of between 10-14 subunits forms the central stalk rotor element with the F(1) delta and epsilon subunits. The chain is ATP synthase subunit c from Synechococcus sp. (strain WH7803).